A 961-amino-acid polypeptide reads, in one-letter code: DNA replication licensing factor MCM2 (961 aa).

Polar residues predominate over residues 1–17 (MDDSENNAPSTPGSPGF). Disordered regions lie at residues 1 to 81 (MDDS…FNDN) and 120 to 220 (AEAE…EEDE). Residues 39–78 (SDDDDDDVVGAEEAEVDPNVLPEDDGVVAAEEEEDGEDLF) are compositionally biased toward acidic residues. 2 stretches are compositionally biased toward basic and acidic residues: residues 120-146 (AEAE…LHDQ) and 166-176 (PPREPRTPRSD). Positions 205 to 220 (QTDDDPYEDEFDEEDE) are enriched in acidic residues. Residues 380–406 (CSKCGTVLGPFFQNSYTEVKVGSCPEC) form a C4-type zinc finger. In terms of domain architecture, MCM spans 524-730 (IGERIVKSIA…FTDEMLARFV (207 aa)). ATP is bound at residue 574–581 (GDPGTAKS). Positions 706 to 709 (SRFD) match the Arginine finger motif.

This sequence belongs to the MCM family. Component of the minichromosome maintenance (MCM) complex, a heterotetramer composed of MCM2, MCM3, MCM4, MCM5, MCM6 and MCM7. Interacts with CSN5. Widely expressed, with higher expression in developing tissues.

The protein localises to the nucleus. It carries out the reaction ATP + H2O = ADP + phosphate + H(+). Probable component of the MCM2-7 complex (MCM complex) that may function as a DNA helicase and which is essential to undergo a single round of replication initiation and elongation per cell cycle in eukaryotic cells. Can complement the fission yeast mcm2 mutant. In Oryza sativa subsp. japonica (Rice), this protein is DNA replication licensing factor MCM2.